Reading from the N-terminus, the 275-residue chain is Formamidopyrimidine-DNA glycosylase (275 aa).

The active-site Schiff-base intermediate with DNA is Pro-2. Residue Glu-3 is the Proton donor of the active site. Lys-60 acts as the Proton donor; for beta-elimination activity in catalysis. Residues His-93 and Arg-112 each coordinate DNA. Residues Phe-240–Lys-274 form an FPG-type zinc finger. The active-site Proton donor; for delta-elimination activity is Arg-264.

This sequence belongs to the FPG family. In terms of assembly, monomer. The cofactor is Zn(2+).

It carries out the reaction Hydrolysis of DNA containing ring-opened 7-methylguanine residues, releasing 2,6-diamino-4-hydroxy-5-(N-methyl)formamidopyrimidine.. The enzyme catalyses 2'-deoxyribonucleotide-(2'-deoxyribose 5'-phosphate)-2'-deoxyribonucleotide-DNA = a 3'-end 2'-deoxyribonucleotide-(2,3-dehydro-2,3-deoxyribose 5'-phosphate)-DNA + a 5'-end 5'-phospho-2'-deoxyribonucleoside-DNA + H(+). Functionally, involved in base excision repair of DNA damaged by oxidation or by mutagenic agents. Acts as a DNA glycosylase that recognizes and removes damaged bases. Has a preference for oxidized purines, such as 7,8-dihydro-8-oxoguanine (8-oxoG). Has AP (apurinic/apyrimidinic) lyase activity and introduces nicks in the DNA strand. Cleaves the DNA backbone by beta-delta elimination to generate a single-strand break at the site of the removed base with both 3'- and 5'-phosphates. The polypeptide is Formamidopyrimidine-DNA glycosylase (Bacillus licheniformis (strain ATCC 14580 / DSM 13 / JCM 2505 / CCUG 7422 / NBRC 12200 / NCIMB 9375 / NCTC 10341 / NRRL NRS-1264 / Gibson 46)).